A 283-amino-acid polypeptide reads, in one-letter code: MIINNNKLAELSSQRVNGLGGLSIHFKDGRSRISRLYQEGAAKIRMPQVGGDPLEAILINTSGGLTGGDRLQWDVELGENASAVITTQACERIYRSGGGEARIATRLKAAKGTRLAWLPQETILFNQSVLSRTLDVELEEGAEILVVEATIFGRLAMGERVDEAMFSDRWRVRLGGRPDGRLVHAEEFRLGPDIGAELQARPVADAACAVATVLLISGEAGKHLEAARQIIGEEGGASLWQVGPATKLMMRLHAPDSYTLRKRLGPLLALLNGKAGLPKVWTF.

The protein belongs to the UreD family. In terms of assembly, ureD, UreF and UreG form a complex that acts as a GTP-hydrolysis-dependent molecular chaperone, activating the urease apoprotein by helping to assemble the nickel containing metallocenter of UreC. The UreE protein probably delivers the nickel.

It is found in the cytoplasm. Its function is as follows. Required for maturation of urease via the functional incorporation of the urease nickel metallocenter. The chain is Urease accessory protein UreD 1 from Brucella anthropi (strain ATCC 49188 / DSM 6882 / CCUG 24695 / JCM 21032 / LMG 3331 / NBRC 15819 / NCTC 12168 / Alc 37) (Ochrobactrum anthropi).